We begin with the raw amino-acid sequence, 243 residues long: Orotidine 5'-phosphate decarboxylase (243 aa).

Substrate contacts are provided by residues Asp-16, Lys-38, 65-74, Thr-120, Arg-181, Gln-190, Gly-210, and Arg-211; that span reads DLKLHDIPNT. The active-site Proton donor is the Lys-67.

It belongs to the OMP decarboxylase family. Type 1 subfamily. In terms of assembly, homodimer.

The catalysed reaction is orotidine 5'-phosphate + H(+) = UMP + CO2. Its pathway is pyrimidine metabolism; UMP biosynthesis via de novo pathway; UMP from orotate: step 2/2. Functionally, catalyzes the decarboxylation of orotidine 5'-monophosphate (OMP) to uridine 5'-monophosphate (UMP). This Bradyrhizobium sp. (strain BTAi1 / ATCC BAA-1182) protein is Orotidine 5'-phosphate decarboxylase.